The sequence spans 161 residues: Phosphopantetheine adenylyltransferase (161 aa).

T9 contributes to the substrate binding site. Residues T9–F10 and H17 each bind ATP. Residues K41, L73, and R87 each coordinate substrate. ATP is bound by residues G88 to R90, E98, and Y123 to T129.

It belongs to the bacterial CoaD family. Homohexamer. Mg(2+) serves as cofactor.

The protein localises to the cytoplasm. The catalysed reaction is (R)-4'-phosphopantetheine + ATP + H(+) = 3'-dephospho-CoA + diphosphate. The protein operates within cofactor biosynthesis; coenzyme A biosynthesis; CoA from (R)-pantothenate: step 4/5. Reversibly transfers an adenylyl group from ATP to 4'-phosphopantetheine, yielding dephospho-CoA (dPCoA) and pyrophosphate. The chain is Phosphopantetheine adenylyltransferase from Cupriavidus metallidurans (strain ATCC 43123 / DSM 2839 / NBRC 102507 / CH34) (Ralstonia metallidurans).